Reading from the N-terminus, the 295-residue chain is Protein PHR1-LIKE 2 (295 aa).

The HTH myb-type domain occupies 38–98; sequence TDPKPRLRWT…HLQKFRLGRQ (61 aa). The H-T-H motif DNA-binding region spans 69-94; sequence PKTIMRTMGVKGLTLYHLKSHLQKFR. Residues 96-138 are disordered; it reads GRQAGKESTENSKDASCVGESQDTGSSSTSSMRMAQQEQNEGY. Positions 99-108 are enriched in basic and acidic residues; it reads AGKESTENSK. Residues 127 to 138 show a composition bias toward polar residues; sequence MRMAQQEQNEGY. Residues 141–161 are a coiled coil; it reads TEALRAQMEVQRRLHDQLEVQ. The short motif at 154–159 is the LHEQLE element; the sequence is LHDQLE.

Belongs to the MYB-CC family. Homo- and heterodimers. Interacts with PHL3, but not with PHR1.

The protein localises to the nucleus. Functionally, transcriptional activator. Acts redundantly with PHR1 as a key component of the central regulatory system controlling transcriptional responses to Pi starvation. Binds in a sequence-specific manner to phosphate starvation-regulated promoters. In Arabidopsis thaliana (Mouse-ear cress), this protein is Protein PHR1-LIKE 2.